A 191-amino-acid polypeptide reads, in one-letter code: Classical arabinogalactan protein 9 (191 aa).

A signal peptide spans 1 to 20; sequence MARSFAIAVICIVLIAGVTG. Residues 20–172 are disordered; the sequence is GQAPTSPPTA…SPTDVNDQNG (153 aa). Q21 is modified (pyrrolidone carboxylic acid). A 4-hydroxyproline mark is found at P23, P26, P27, P31, and P33. The span at 24–146 shows a compositional bias: pro residues; that stretch reads TSPPTATPAP…PSPSSSPPLP (123 aa). P26, P27, P31, and P33 each carry an O-linked (Ara...) hydroxyproline glycan. Positions 155–172 are enriched in polar residues; it reads TDSISPAPSPTDVNDQNG. G172 is lipidated: GPI-anchor amidated glycine. The propeptide at 173-191 is removed in mature form; that stretch reads ASKMVSSLVFGSVLVWFMI.

This sequence belongs to the classical AGP family. Post-translationally, O-glycosylated on hydroxyprolines; noncontiguous hydroxylproline residues are glycosylated with arabinogalactan. Predominantly expressed in flowers and at a lower level in leaves and siliques.

It localises to the cell membrane. Proteoglycan that seems to be implicated in diverse developmental roles such as differentiation, cell-cell recognition, embryogenesis and programmed cell death. The sequence is that of Classical arabinogalactan protein 9 (AGP9) from Arabidopsis thaliana (Mouse-ear cress).